Here is a 229-residue protein sequence, read N- to C-terminus: MPKKKVLTPLPYLASIVFLPWWISLSFNKSLEPWVTNWWNTKQSEIFLNDIQEKNVLERFIELEELVLLDEMIKEYPETHIQKLRIGIHKETIQLVKMQNQNDIQIILHFSTNIITLTILSGFFIMGNEELVILNSWVQEFFYNLSDTIKAFSILLLTDLCIGFHSPHGWELMIGSIYKDFGFAHNDQIISGLVSTFPVILDTILKYWIFHYLNRVSPSLVVIYHSMNE.

The next 3 membrane-spanning stretches (helical) occupy residues 7–27 (LTPLPYLASIVFLPWWISLSF), 106–126 (IILHFSTNIITLTILSGFFIM), and 189–209 (IISGLVSTFPVILDTILKYWI).

Belongs to the CemA family.

It is found in the plastid. It localises to the chloroplast inner membrane. It carries out the reaction K(+)(in) + H(+)(out) = K(+)(out) + H(+)(in). Its function is as follows. Contributes to K(+)/H(+) antiport activity by supporting proton efflux to control proton extrusion and homeostasis in chloroplasts in a light-dependent manner to modulate photosynthesis. Prevents excessive induction of non-photochemical quenching (NPQ) under continuous-light conditions. Indirectly promotes efficient inorganic carbon uptake into chloroplasts. In Ceratophyllum demersum (Rigid hornwort), this protein is Potassium/proton antiporter CemA.